A 201-amino-acid polypeptide reads, in one-letter code: UPF0323 lipoprotein Cj0371 (201 aa).

A signal peptide spans 1-26; sequence MKKIKKIIQIGMIGGLAAVAGGALAG. A lipid anchor (N-palmitoyl cysteine) is attached at C27. Residue C27 is the site of S-diacylglycerol cysteine attachment. The interval 169-201 is disordered; the sequence is NKAGTTSSASSAKKSGFFGGGSKATSSSSSFGS. 2 stretches are compositionally biased toward low complexity: residues 170-184 and 191-201; these read KAGT…KKSG and KATSSSSSFGS.

The protein belongs to the UPF0323 family.

It is found in the cell membrane. The polypeptide is UPF0323 lipoprotein Cj0371 (Campylobacter jejuni subsp. jejuni serotype O:2 (strain ATCC 700819 / NCTC 11168)).